The chain runs to 357 residues: Glutamine synthetase root isozyme A (357 aa).

The 81-residue stretch at 19-99 (IIAEYIWVGG…VICDVYTPAG (81 aa)) folds into the GS beta-grasp domain. The GS catalytic domain maps to 106–357 (KRYNAAKIFS…AETTILWKKP (252 aa)).

Belongs to the glutamine synthetase family. In terms of assembly, homooctamer.

Its subcellular location is the cytoplasm. The catalysed reaction is L-glutamate + NH4(+) + ATP = L-glutamine + ADP + phosphate + H(+). The chain is Glutamine synthetase root isozyme A (GS3A) from Pisum sativum (Garden pea).